The chain runs to 429 residues: 3-phosphoshikimate 1-carboxyvinyltransferase (429 aa).

The 3-phosphoshikimate site is built by Lys22, Ser23, and Arg27. Phosphoenolpyruvate is bound at residue Lys22. Residues Gly94 and Arg122 each coordinate phosphoenolpyruvate. The 3-phosphoshikimate site is built by Ser167, Gln169, Asp315, and Lys342. A phosphoenolpyruvate-binding site is contributed by Gln169. Asp315 acts as the Proton acceptor in catalysis. Arg346 and Arg388 together coordinate phosphoenolpyruvate.

Belongs to the EPSP synthase family. As to quaternary structure, monomer.

The protein localises to the cytoplasm. It catalyses the reaction 3-phosphoshikimate + phosphoenolpyruvate = 5-O-(1-carboxyvinyl)-3-phosphoshikimate + phosphate. It functions in the pathway metabolic intermediate biosynthesis; chorismate biosynthesis; chorismate from D-erythrose 4-phosphate and phosphoenolpyruvate: step 6/7. Catalyzes the transfer of the enolpyruvyl moiety of phosphoenolpyruvate (PEP) to the 5-hydroxyl of shikimate-3-phosphate (S3P) to produce enolpyruvyl shikimate-3-phosphate and inorganic phosphate. The polypeptide is 3-phosphoshikimate 1-carboxyvinyltransferase (Geobacter metallireducens (strain ATCC 53774 / DSM 7210 / GS-15)).